The following is a 139-amino-acid chain: MHEWALADAIVRTVLEHAQKENASKVLAVKVVLGELQDVDAKIVEFAMNELFKGTIAEGAEIIFEEEEAVFKCRNCGYEWRLSEVREKLDERMREDIHFIPEVVHAFLSCPRCGSHDFEVVKGRGVYIAGIKIEKEGEQ.

Histidine 2 serves as a coordination point for Ni(2+). Residues cysteine 73, cysteine 76, cysteine 110, and cysteine 113 each coordinate Zn(2+).

This sequence belongs to the HypA/HybF family.

Involved in the maturation of [NiFe] hydrogenases. Required for nickel insertion into the metal center of the hydrogenase. The chain is Hydrogenase maturation factor HypA from Pyrococcus horikoshii (strain ATCC 700860 / DSM 12428 / JCM 9974 / NBRC 100139 / OT-3).